The primary structure comprises 160 residues: UPF0758 protein YfjY (160 aa).

An MPN domain is found at 38–160; the sequence is AFTSTQAARD…IYSFAEHGLL (123 aa). Residues His109, His111, and Asp122 each contribute to the Zn(2+) site. The short motif at 109–122 is the JAMM motif element; that stretch reads HNHPSGDTTPSQAD.

Belongs to the UPF0758 family.

The sequence is that of UPF0758 protein YfjY (yfjY) from Escherichia coli (strain K12).